The following is a 210-amino-acid chain: Large ribosomal subunit protein uL3 (210 aa).

The interval 131 to 165 (GPMSHGSKYHRRVGSMGATTDPGRTFKGKKMPGRM) is disordered.

This sequence belongs to the universal ribosomal protein uL3 family. As to quaternary structure, part of the 50S ribosomal subunit. Forms a cluster with proteins L14 and L19.

Functionally, one of the primary rRNA binding proteins, it binds directly near the 3'-end of the 23S rRNA, where it nucleates assembly of the 50S subunit. The protein is Large ribosomal subunit protein uL3 of Caldanaerobacter subterraneus subsp. tengcongensis (strain DSM 15242 / JCM 11007 / NBRC 100824 / MB4) (Thermoanaerobacter tengcongensis).